The chain runs to 180 residues: MALRPRFWKCLSVCRKLECGFAALSTSSVPAVQPDVESKENEAVAPEFTNRNPRNLELLGVARKERGWATVWPNREFWHRLRVVKTQHHVEAFVEHLNGQVVVSASTREWAIKKHLYSTRNVVACESIGRVLAQRCLEAGINFMVYQPTPWEASSDSIKRLQNAMTESGVMLREPRRIYE.

It belongs to the universal ribosomal protein uL18 family. As to quaternary structure, component of the mitochondrial ribosome large subunit (39S) which comprises a 16S rRNA and about 50 distinct proteins.

The protein resides in the mitochondrion. Functionally, together with thiosulfate sulfurtransferase (TST), acts as a mitochondrial import factor for the cytosolic 5S rRNA. The precursor form shows RNA chaperone activity; is able to fold the 5S rRNA into an import-competent conformation that is recognized by rhodanese (TST). Both the cytoplasmic and mitochondrial forms are able to bind to the helix IV-loop D in the gamma domain of the 5S rRNA. The chain is Large ribosomal subunit protein uL18m (Mrpl18) from Mus musculus (Mouse).